We begin with the raw amino-acid sequence, 347 residues long: tRNA N6-adenosine threonylcarbamoyltransferase (347 aa).

Residues H111 and H115 each contribute to the Fe cation site. Residues 134 to 138 (LVSGG), D167, G180, and N277 each bind substrate. Residue D305 coordinates Fe cation.

It belongs to the KAE1 / TsaD family. Requires Fe(2+) as cofactor.

The protein resides in the cytoplasm. It catalyses the reaction L-threonylcarbamoyladenylate + adenosine(37) in tRNA = N(6)-L-threonylcarbamoyladenosine(37) in tRNA + AMP + H(+). Functionally, required for the formation of a threonylcarbamoyl group on adenosine at position 37 (t(6)A37) in tRNAs that read codons beginning with adenine. Is involved in the transfer of the threonylcarbamoyl moiety of threonylcarbamoyl-AMP (TC-AMP) to the N6 group of A37, together with TsaE and TsaB. TsaD likely plays a direct catalytic role in this reaction. The polypeptide is tRNA N6-adenosine threonylcarbamoyltransferase (Ralstonia pickettii (strain 12J)).